The following is a 310-amino-acid chain: Carbamate kinase (310 aa).

It belongs to the carbamate kinase family. Homodimer.

It localises to the cytoplasm. The enzyme catalyses hydrogencarbonate + NH4(+) + ATP = carbamoyl phosphate + ADP + H2O + H(+). The protein operates within amino-acid degradation; L-arginine degradation via ADI pathway. This chain is Carbamate kinase, found in Haemophilus influenzae (strain ATCC 51907 / DSM 11121 / KW20 / Rd).